A 295-amino-acid polypeptide reads, in one-letter code: sn-glycerol-3-phosphate transport system permease protein UgpA (295 aa).

The Cytoplasmic portion of the chain corresponds to 1 to 11 (MSSSRPVFRSR). Residues 12-32 (WLPYLLVAPQLVITVIFFIWP) form a helical membrane-spanning segment. The Periplasmic segment spans residues 33–80 (AGEALWYSLQSVDPFGFSSQFVGLENFVALFHDSYYLDAFWTTIKFSA). An ABC transmembrane type-1 domain is found at 76-284 (IKFSALVTFS…FLVIILTVVQ (209 aa)). Residues 81 to 101 (LVTFSGLLVSLFFAALVDYVV) form a helical membrane-spanning segment. Topologically, residues 102 to 109 (RGSRFYQT) are cytoplasmic. The helical transmembrane segment at 110 to 130 (LMLLPYAVAPAVAAVLWIFLF) threads the bilayer. At 131-157 (NPGRGLITHFLGEFGYDWNHAQNSGQA) the chain is on the periplasmic side. A helical transmembrane segment spans residues 158 to 178 (MFLVVFASVWKQISYNFLFFF). At 179-207 (AALQSIPRSLVEAAAIDGAGPIRRFFRLS) the chain is on the cytoplasmic side. Residues 208–228 (LPLIAPVSFFLLVVNLVYAFF) traverse the membrane as a helical segment. At 229–262 (DTFPVIDAATAGGPVQATTTLIYKIYREGFTGLD) the chain is on the periplasmic side. A helical transmembrane segment spans residues 263–283 (LSASAAQSVVLMFLVIILTVV). At 284–295 (QFRYVESKVRYQ) the chain is on the cytoplasmic side.

Belongs to the binding-protein-dependent transport system permease family. UgpAE subfamily. The complex is composed of two ATP-binding proteins (UgpC), two transmembrane proteins (UgpA and UgpE) and a solute-binding protein (UgpB).

The protein resides in the cell inner membrane. Part of the ABC transporter complex UgpBAEC involved in sn-glycerol-3-phosphate (G3P) import. Probably responsible for the translocation of the substrate across the membrane. This Salmonella typhimurium (strain LT2 / SGSC1412 / ATCC 700720) protein is sn-glycerol-3-phosphate transport system permease protein UgpA (ugpA).